The following is a 181-amino-acid chain: Sporozoite-associated mosquito saliva protein 1 (181 aa).

The first 24 residues, methionine 1–alanine 24, serve as a signal peptide directing secretion.

Salivary gland (at protein level). As to expression, (Microbial infection) Detected with Plasmodium berghei sporozoites isolated from the saliva of infected Anopheles gambiae mosquitoes (at protein level).

It localises to the secreted. Functionally, decreases host neutrophil chemotaxis induced by N-formylmethionine-leucyl-phenylalanine (fMLP). (Microbial infection) Interacts with the surface of Plasmodium berghei sporozoites. Enhances sporozoite gliding activity. Enhances host hepatocyte traversal by sporozoites. The protein is Sporozoite-associated mosquito saliva protein 1 of Anopheles gambiae (African malaria mosquito).